The following is a 208-amino-acid chain: Putative archaetidylserine decarboxylase proenzyme (208 aa).

Ser172 acts as the Schiff-base intermediate with substrate; via pyruvic acid in catalysis. Ser172 bears the Pyruvic acid (Ser); by autocatalysis mark.

The protein belongs to the phosphatidylserine decarboxylase family. PSD-A subfamily. As to quaternary structure, heterodimer of a large membrane-associated beta subunit and a small pyruvoyl-containing alpha subunit. Requires pyruvate as cofactor. Is synthesized initially as an inactive proenzyme. Formation of the active enzyme involves a self-maturation process in which the active site pyruvoyl group is generated from an internal serine residue via an autocatalytic post-translational modification. Two non-identical subunits are generated from the proenzyme in this reaction, and the pyruvate is formed at the N-terminus of the alpha chain, which is derived from the carboxyl end of the proenzyme. The post-translation cleavage follows an unusual pathway, termed non-hydrolytic serinolysis, in which the side chain hydroxyl group of the serine supplies its oxygen atom to form the C-terminus of the beta chain, while the remainder of the serine residue undergoes an oxidative deamination to produce ammonia and the pyruvoyl prosthetic group on the alpha chain.

It is found in the cell membrane. The enzyme catalyses archaetidylserine + H(+) = archaetidylethanolamine + CO2. Its function is as follows. Catalyzes the formation of archaetidylethanolamine (PtdEtn) from archaetidylserine (PtdSer). The protein is Putative archaetidylserine decarboxylase proenzyme of Methanosarcina mazei (strain ATCC BAA-159 / DSM 3647 / Goe1 / Go1 / JCM 11833 / OCM 88) (Methanosarcina frisia).